The following is a 218-amino-acid chain: Ras-related protein RabO (218 aa).

Residue 15-22 (GDYCVGKT) participates in GTP binding. The short motif at 37-45 (RNCNIGVDF) is the Effector region element. GTP-binding positions include 63–67 (DTGGQ) and 122–125 (NKID). Cysteine 215 carries the cysteine methyl ester modification. Cysteine 215 carries the S-geranylgeranyl cysteine lipid modification. Residues 216-218 (FIL) constitute a propeptide, removed in mature form.

The protein belongs to the small GTPase superfamily. Rab family.

The protein resides in the cell membrane. In Dictyostelium discoideum (Social amoeba), this protein is Ras-related protein RabO (rabO).